Here is a 107-residue protein sequence, read N- to C-terminus: Nucleoid-associated protein AZOSEA06390 (107 aa).

This sequence belongs to the YbaB/EbfC family. In terms of assembly, homodimer.

It localises to the cytoplasm. The protein localises to the nucleoid. Binds to DNA and alters its conformation. May be involved in regulation of gene expression, nucleoid organization and DNA protection. The sequence is that of Nucleoid-associated protein AZOSEA06390 from Aromatoleum aromaticum (strain DSM 19018 / LMG 30748 / EbN1) (Azoarcus sp. (strain EbN1)).